The sequence spans 176 residues: Ribosome maturation factor RimM (176 aa).

Residues 97 to 176 (EDEFYWRDLI…QILVDWDPDF (80 aa)) enclose the PRC barrel domain.

Belongs to the RimM family. As to quaternary structure, binds ribosomal protein uS19.

It localises to the cytoplasm. Its function is as follows. An accessory protein needed during the final step in the assembly of 30S ribosomal subunit, possibly for assembly of the head region. Essential for efficient processing of 16S rRNA. May be needed both before and after RbfA during the maturation of 16S rRNA. It has affinity for free ribosomal 30S subunits but not for 70S ribosomes. This chain is Ribosome maturation factor RimM, found in Shewanella putrefaciens (strain CN-32 / ATCC BAA-453).